A 201-amino-acid chain; its full sequence is Imidazole glycerol phosphate synthase subunit HisH (201 aa).

The 201-residue stretch at 1 to 201 folds into the Glutamine amidotransferase type-1 domain; it reads MIAIIDYGAG…LLKRYEEMIR (201 aa). Residue C79 is the Nucleophile of the active site. Catalysis depends on residues H181 and E183.

As to quaternary structure, heterodimer of HisH and HisF.

It localises to the cytoplasm. It catalyses the reaction 5-[(5-phospho-1-deoxy-D-ribulos-1-ylimino)methylamino]-1-(5-phospho-beta-D-ribosyl)imidazole-4-carboxamide + L-glutamine = D-erythro-1-(imidazol-4-yl)glycerol 3-phosphate + 5-amino-1-(5-phospho-beta-D-ribosyl)imidazole-4-carboxamide + L-glutamate + H(+). The enzyme catalyses L-glutamine + H2O = L-glutamate + NH4(+). Its pathway is amino-acid biosynthesis; L-histidine biosynthesis; L-histidine from 5-phospho-alpha-D-ribose 1-diphosphate: step 5/9. IGPS catalyzes the conversion of PRFAR and glutamine to IGP, AICAR and glutamate. The HisH subunit catalyzes the hydrolysis of glutamine to glutamate and ammonia as part of the synthesis of IGP and AICAR. The resulting ammonia molecule is channeled to the active site of HisF. This is Imidazole glycerol phosphate synthase subunit HisH from Oceanobacillus iheyensis (strain DSM 14371 / CIP 107618 / JCM 11309 / KCTC 3954 / HTE831).